The chain runs to 995 residues: DNA repair protein Rev1 (995 aa).

Residues R35–L121 form the BRCT domain. 2 disordered regions span residues G135–K164 and V182–R211. The span at K136–K164 shows a compositional bias: basic and acidic residues. The span at A192–R211 shows a compositional bias: low complexity. The UmuC domain maps to V275 to G505. Mg(2+) is bound at residue D279. DCTP-binding positions include S361–R367, N373, and D421. D421 contacts Mg(2+). E422 is an active-site residue. The interaction with PolI stretch occupies residues S696 to A868. The segment at V878–S995 is interaction with PolH/DNApol-eta.

Belongs to the DNA polymerase type-Y family. Interacts (via C-terminus) with PolH/DNApol-eta (via C-terminal regions). Interacts (via C-terminus) with PolI. It depends on Mg(2+) as a cofactor.

The protein localises to the nucleus. Functionally, deoxycytidyl transferase involved in DNA repair. Transfers a dCMP residue from dCTP to the 3'-end of a DNA primer in a template-dependent reaction. May assist in the first step in the bypass of abasic lesions by the insertion of a nucleotide opposite the lesion. Required for normal induction of mutations by physical and chemical agents. During homologous recombination (HR) repair of DNA double-strand breaks (DSBs) regulates the extent of repair synthesis. Possibly recruits the DNA polymerase zeta complex or another translesion polymerase to early DSB repair intermediates to initiate repair synthesis, while also blocking the access of more processive polymerases preventing them from acting during the initial stages of HR repair. In Drosophila melanogaster (Fruit fly), this protein is DNA repair protein Rev1.